We begin with the raw amino-acid sequence, 391 residues long: Processive diacylglycerol beta-glucosyltransferase (391 aa).

This sequence belongs to the glycosyltransferase 28 family. UgtP subfamily.

The protein resides in the cell membrane. The catalysed reaction is a 1,2-diacyl-3-O-(beta-D-glucopyranosyl)-sn-glycerol + UDP-alpha-D-glucose = a 1,2-diacyl-3-O-(beta-D-Glc-(1-&gt;6)-beta-D-Glc)-sn-glycerol + UDP + H(+). The enzyme catalyses a 1,2-diacyl-sn-glycerol + UDP-alpha-D-glucose = a 1,2-diacyl-3-O-(beta-D-glucopyranosyl)-sn-glycerol + UDP + H(+). The protein operates within glycolipid metabolism; diglucosyl-diacylglycerol biosynthesis. Its function is as follows. Processive glucosyltransferase involved in the biosynthesis of both the bilayer- and non-bilayer-forming membrane glucolipids. Is able to successively transfer two glucosyl residues to diacylglycerol (DAG), thereby catalyzing the formation of beta-monoglucosyl-DAG (3-O-(beta-D-glucopyranosyl)-1,2-diacyl-sn-glycerol) and beta-diglucosyl-DAG (3-O-(beta-D-glucopyranosyl-beta-(1-&gt;6)-D-glucopyranosyl)-1,2-diacyl-sn-glycerol). Beta-diglucosyl-DAG is the predominant glycolipid found in Bacillales and is also used as a membrane anchor for lipoteichoic acid (LTA). The chain is Processive diacylglycerol beta-glucosyltransferase from Staphylococcus epidermidis (strain ATCC 35984 / DSM 28319 / BCRC 17069 / CCUG 31568 / BM 3577 / RP62A).